Consider the following 419-residue polypeptide: L-rhamnose isomerase (419 aa).

The Mn(2+) site is built by H262, D294, and D296.

Belongs to the rhamnose isomerase family. Homotetramer. Mn(2+) serves as cofactor.

The protein resides in the cytoplasm. It carries out the reaction L-rhamnopyranose = L-rhamnulose. It participates in carbohydrate degradation; L-rhamnose degradation; glycerone phosphate from L-rhamnose: step 1/3. In terms of biological role, catalyzes the interconversion of L-rhamnose and L-rhamnulose. This Escherichia coli O6:H1 (strain CFT073 / ATCC 700928 / UPEC) protein is L-rhamnose isomerase.